A 515-amino-acid polypeptide reads, in one-letter code: Fatty acyl-CoA reductase 2 (515 aa).

At 1–464 (MSTIAAFYGG…KAKQRLKRLR (464 aa)) the chain is on the cytoplasmic side. The helical transmembrane segment at 465–484 (NIHYLFNTALFLIAWRLLIA) threads the bilayer. Over 485-515 (RSQMARNVWFFIVSFCYKFLSYFRASSTLKV) the chain is Peroxisomal.

The protein belongs to the fatty acyl-CoA reductase family.

The protein resides in the peroxisome membrane. The catalysed reaction is a long-chain fatty acyl-CoA + 2 NADPH + 2 H(+) = a long-chain primary fatty alcohol + 2 NADP(+) + CoA. It carries out the reaction a very long-chain fatty acyl-CoA + 2 NADPH + 2 H(+) = a very long-chain primary fatty alcohol + 2 NADP(+) + CoA. The enzyme catalyses an ultra-long-chain fatty acyl-CoA + 2 NADPH + 2 H(+) = an ultra long-chain primary fatty alcohol + 2 NADP(+) + CoA. It catalyses the reaction hexadecanoyl-CoA + 2 NADPH + 2 H(+) = hexadecan-1-ol + 2 NADP(+) + CoA. The catalysed reaction is octadecanoyl-CoA + 2 NADPH + 2 H(+) = octadecan-1-ol + 2 NADP(+) + CoA. It carries out the reaction eicosanoyl-CoA + 2 NADPH + 2 H(+) = eicosan-1-ol + 2 NADP(+) + CoA. The enzyme catalyses docosanoyl-CoA + 2 NADPH + 2 H(+) = docosan-1-ol + 2 NADP(+) + CoA. It catalyses the reaction tetracosanoyl-CoA + 2 NADPH + 2 H(+) = tetracosan-1-ol + 2 NADP(+) + CoA. The catalysed reaction is hexacosanoyl-CoA + 2 NADPH + 2 H(+) = hexacosan-1-ol + 2 NADP(+) + CoA. It carries out the reaction octacosanoyl-CoA + 2 NADPH + 2 H(+) = octacosan-1-ol + 2 NADP(+) + CoA. The enzyme catalyses triacontanoyl-CoA + 2 NADPH + 2 H(+) = triacontan-1-ol + 2 NADP(+) + CoA. It catalyses the reaction 18-methylnonadecanoyl-CoA + 2 NADPH + 2 H(+) = 18-methylnonadecan-1-ol + 2 NADP(+) + CoA. The catalysed reaction is 20-methylheneicosanoyl-CoA + 2 NADPH + 2 H(+) = 20-methylheneicosan-1-ol + 2 NADP(+) + CoA. It carries out the reaction 22-methyltricosanoyl-CoA + 2 NADPH + 2 H(+) = 22-methyltricosan-1-ol + 2 NADP(+) + CoA. The enzyme catalyses 24-methylpentacosanoyl-CoA + 2 NADPH + 2 H(+) = 24-methylpentacosan-1-ol + 2 NADP(+) + CoA. Its function is as follows. Catalyzes the reduction of saturated but not unsaturated C16 or C18 fatty acyl-CoA to fatty alcohols (FAls). A lower activity can be observed with shorter fatty acyl-CoA substrates. Can produce very long-chain and ultra long-chain FAls, regardless of whether they have a straight or branched chain. Involved in the production of ether lipids/plasmalogens and wax monoesters whose synthesis requires FAls as substrates. The chain is Fatty acyl-CoA reductase 2 from Homo sapiens (Human).